A 321-amino-acid chain; its full sequence is NADPH-dependent codeinone reductase 1-1 (321 aa).

Thr27 and Asp51 together coordinate NADPH. Residues Tyr56 and His119 each act as proton donor in the active site. Position 119 (His119) interacts with substrate. Residues Gln187, Ser214, Leu216, Ser264, and Arg269 each contribute to the NADPH site.

It belongs to the aldo/keto reductase family. As to expression, latex secreting cells (laticifer cells). Expressed constitutively and ubiquitously with highest levels in capsules. Restricted to the parietal region of sieve elements adjacent or proximal to laticifers in roots, stems, leaves and carpels.

Its subcellular location is the cytoplasm. The protein resides in the cytosol. It carries out the reaction codeine + NADP(+) = codeinone + NADPH + H(+). The catalysed reaction is neopine + NADP(+) = neopinone + NADPH + H(+). It catalyses the reaction morphine + NADP(+) = morphinone + NADPH + H(+). The enzyme catalyses neomorphine + NADP(+) = neomorphinone + NADPH + H(+). The protein operates within alkaloid biosynthesis; morphine biosynthesis. In terms of biological role, NADPH-dependent reductase involved in biosynthesis of morphinan-type benzylisoquinoline and opiate alkaloids natural products. Reduces codeinone to codeine in the penultimate step in morphine biosynthesis. Can use morphinone, hydrocodone and hydromorphone as substrate during reductive reaction with NADPH as cofactor, and morphine and dihydrocodeine as substrate during oxidative reaction with NADP as cofactor. Converts morphinone to morphine, and neomorphinone to neomorphine. Reduces irreversibly neopinone, a spontaneous isomer of codeinone, to neopine; in planta, neopine levels are limited to low levels. The sequence is that of NADPH-dependent codeinone reductase 1-1 from Papaver somniferum (Opium poppy).